Reading from the N-terminus, the 75-residue chain is U6-lycotoxin-Ls1e (75 aa).

Residues 1-21 form the signal peptide; the sequence is MKLLLFTALVLVVISLIEVEA. Positions 22 to 25 are excised as a propeptide; it reads ENER.

It belongs to the neurotoxin 19 (CSTX) family. 06 (U6-Lctx) subfamily. Contains 4 disulfide bonds. Expressed by the venom gland.

Its subcellular location is the secreted. The protein is U6-lycotoxin-Ls1e of Lycosa singoriensis (Wolf spider).